The sequence spans 655 residues: p-hydroxybenzoic acid efflux pump subunit AaeB (655 aa).

Transmembrane regions (helical) follow at residues 13–33 (FAVK…HFQL), 38–58 (WAVL…GGEP), 69–89 (LRII…IAMI), 93–113 (LLMI…SSLV), 121–141 (WGLA…EPLL), 152–172 (EIVI…PRSI), 370–390 (LFWL…IAVV), 407–427 (FIYG…VIIP), 431–451 (QSML…GIEV), 459–479 (MGAL…TFHF), and 482–502 (FLDS…VILL).

Belongs to the aromatic acid exporter ArAE (TC 2.A.85) family.

It localises to the cell inner membrane. In terms of biological role, forms an efflux pump with AaeA. Could function as a metabolic relief valve, allowing to eliminate certain compounds when they accumulate to high levels in the cell. The polypeptide is p-hydroxybenzoic acid efflux pump subunit AaeB (Escherichia coli O7:K1 (strain IAI39 / ExPEC)).